The primary structure comprises 830 residues: MISARPWLLYLSVIQAFTTEAQPAESLHTEVPENYGGNFPFYILKLPLPLGRDEGHIVLSGDSNTADQNTFAVDTDSGFLVATRTLDREEKAEYQLQVTLESEDGRILWGPQLVTVHVKDENDQVPQFSQAIYRAQLSQGTRPGVPFLFLEASDGDAPGTANSDLRFHILSQSPPQPLPDMFQLDPHLGALALSPSGSTSLDHALEETYQLLVQVKDMGDQPSGHQAIATVEISIVENSWAPLEPVHLAENLKVVYPHSIAQVHWSGGDVHYQLESQPPGPFDVDTEGMLHVTMELDREAQAEYQLQVRAQNSHGEDYAEPLELQVVVMDENDNAPVCSPHDPTVNIPELSPPGTEIARLSAEDLDAPGSPNSHIVYQLLSPEPEEGAENKAFELDPTSGSVTLGTAPLHAGQSILLQVLAVDLAGSESGLSSTCEVTVMVTDVNNHAPEFINSQIGPVTLPEDVKPGALVATLMATDADLEPAFRLMDFAIEEGDPEGIFDLSWEPDSDHVQLRLRKNLSYEAAPDHKVVVVVSNIEELVGPGPGPAATATVTILVERVVAPLKLDQESYETSIPVSTPAGSLLLTIQPSDPMSRTLRFSLVNDSEGWLCIKEVSGEVHTAQSLQGAQPGDTYTVLVEAQDTDKPGLSTSATVVIHFLKASPVPALTLSAGPSRHLCTPRQDYGVVVSGVSEDPDLANRNGPYSFALGPNPTVQRDWRLQPLNDSHAYLTLALHWVEPGEYMVPVVVHHDTHMWQLQVKVIVCRCNVEGQCMRKVGRMKGMPTKLSAVGVLLGTLAAIGFILILVFTHLALARKDLDQPADSVPLKAAV.

Positions M1–A21 are cleaved as a signal peptide. Over Q22–A788 the chain is Extracellular. 6 Cadherin domains span residues L27 to F128, Y133 to E237, E244 to C338, P343 to F451, G457 to L566, and Y571 to L667. N519, N604, and N724 each carry an N-linked (GlcNAc...) asparagine glycan. The segment at T668–A788 is ectodomain G. The helical transmembrane segment at V789–H809 threads the bilayer. Over L810–V830 the chain is Cytoplasmic. Residue S823 is modified to Phosphoserine.

As to expression, kidney specific.

It is found in the cell membrane. In terms of biological role, cadherins are calcium-dependent cell adhesion proteins. They preferentially interact with themselves in a homophilic manner in connecting cells; cadherins may thus contribute to the sorting of heterogeneous cell types. This is Cadherin-16 (Cdh16) from Mus musculus (Mouse).